The sequence spans 326 residues: Polycomb complex protein BMI-1-A (326 aa).

The RING-type zinc-finger motif lies at 18-57 (CVLCGGYFIDATTIIECLHSFCKTCIVRYLETSKYCPICD). Residues 81–95 (KLVPGLFKGEMKRRR) carry the Nuclear localization signal motif. Disordered stretches follow at residues 239–262 (NPHT…DKAG) and 274–326 (CIPS…ISSG). Residues 290–303 (ISSTINGTSSSSSS) are compositionally biased toward low complexity.

In terms of assembly, component of a PRC1-like complex. Interacts with cbx4.

The protein resides in the nucleus. In terms of biological role, component of a Polycomb group (PcG) multiprotein PRC1-like complex, a complex class required to maintain the transcriptionally repressive state of many genes, including Hox genes, throughout development. PcG PRC1 complex acts via chromatin remodeling and modification of histones; it mediates monoubiquitination of histone H2A 'Lys-119', rendering chromatin heritably changed in its expressibility. In the PRC1 complex, it is required to stimulate the E3 ubiquitin-protein ligase activity of rnf2. The protein is Polycomb complex protein BMI-1-A (bmi1a) of Xenopus laevis (African clawed frog).